The following is a 188-amino-acid chain: Peptidyl-tRNA hydrolase (188 aa).

Phe-14 provides a ligand contact to tRNA. The Proton acceptor role is filled by His-19. Positions 64, 66, and 112 each coordinate tRNA.

It belongs to the PTH family. As to quaternary structure, monomer.

Its subcellular location is the cytoplasm. The enzyme catalyses an N-acyl-L-alpha-aminoacyl-tRNA + H2O = an N-acyl-L-amino acid + a tRNA + H(+). In terms of biological role, hydrolyzes ribosome-free peptidyl-tRNAs (with 1 or more amino acids incorporated), which drop off the ribosome during protein synthesis, or as a result of ribosome stalling. Functionally, catalyzes the release of premature peptidyl moieties from peptidyl-tRNA molecules trapped in stalled 50S ribosomal subunits, and thus maintains levels of free tRNAs and 50S ribosomes. The chain is Peptidyl-tRNA hydrolase from Aster yellows witches'-broom phytoplasma (strain AYWB).